The primary structure comprises 466 residues: Polycomb group protein FIE1 (466 aa).

Residues 1–10 (MGPTSRNHKS) show a composition bias toward basic residues. The tract at residues 1 to 71 (MGPTSRNHKS…GEGEPQETVL (71 aa)) is disordered. The segment covering 31–49 (SITASASASAFASPAVANS) has biased composition (low complexity). WD repeat units lie at residues 167–209 (DMNE…IYKS), 212–252 (GHGG…LILV), 258–298 (GHRH…EYVE), 324–361 (IHSN…ENPG), 374–414 (PECN…PVLI), and 421–460 (QVKS…TAPV).

Belongs to the WD repeat ESC family. As to quaternary structure, interacts with EZ1 and CLF. Component of the polycomb repressive complex 2 (PRC2), which methylates 'Lys-27' residues of histone H3 (H3K27me3), leading to transcriptional repression of the affected target gene. In terms of tissue distribution, expressed specifically in seed endosperm.

Its function is as follows. Polycomb group (PcG) protein. PcG proteins act by forming multiprotein complexes, which are required to maintain the transcriptionally repressive state of homeotic genes throughout development. PcG proteins are not required to initiate repression, but to maintain it during later stages of development. They act via the methylation of histones, rendering chromatin heritably changed in its expressibility. Together with EZ1 and CLF forms a complex that is involved in gene transcriptional repression by trimethylation on histone H3 'Lys-27' (H3K27me3) of target genes. Involved in the regulation of embryo and seed endosperm development. FIE1-containing PcG complex in seed endosperm regulates the expression of various transcription factors by trimethylation on histone H3 'Lys-27' (H3K27me3) of target genes. Involved in the overall expression regulation of nutrient metabolism genes, such as prolamin synthesis and seed storage protein synthesis genes. Can regulate valine, leucine and isoleucine metabolism-related genes. This chain is Polycomb group protein FIE1, found in Oryza sativa subsp. japonica (Rice).